A 398-amino-acid chain; its full sequence is 1-deoxy-D-xylulose 5-phosphate reductoisomerase (398 aa).

The NADPH site is built by threonine 11, glycine 12, serine 13, isoleucine 14, and asparagine 125. Lysine 126 provides a ligand contact to 1-deoxy-D-xylulose 5-phosphate. Glutamate 127 serves as a coordination point for NADPH. Aspartate 151 contacts Mn(2+). The 1-deoxy-D-xylulose 5-phosphate site is built by serine 152, glutamate 153, serine 186, and histidine 209. Glutamate 153 lines the Mn(2+) pocket. Position 215 (glycine 215) interacts with NADPH. 1-deoxy-D-xylulose 5-phosphate contacts are provided by serine 222, asparagine 227, lysine 228, and glutamate 231. Position 231 (glutamate 231) interacts with Mn(2+).

This sequence belongs to the DXR family. The cofactor is Mg(2+). Mn(2+) is required as a cofactor.

The enzyme catalyses 2-C-methyl-D-erythritol 4-phosphate + NADP(+) = 1-deoxy-D-xylulose 5-phosphate + NADPH + H(+). It participates in isoprenoid biosynthesis; isopentenyl diphosphate biosynthesis via DXP pathway; isopentenyl diphosphate from 1-deoxy-D-xylulose 5-phosphate: step 1/6. Catalyzes the NADPH-dependent rearrangement and reduction of 1-deoxy-D-xylulose-5-phosphate (DXP) to 2-C-methyl-D-erythritol 4-phosphate (MEP). The polypeptide is 1-deoxy-D-xylulose 5-phosphate reductoisomerase (Acinetobacter baumannii (strain AB307-0294)).